The primary structure comprises 354 residues: Peptide chain release factor 1 (354 aa).

An N5-methylglutamine modification is found at Q230.

The protein belongs to the prokaryotic/mitochondrial release factor family. Post-translationally, methylated by PrmC. Methylation increases the termination efficiency of RF1.

The protein localises to the cytoplasm. Functionally, peptide chain release factor 1 directs the termination of translation in response to the peptide chain termination codons UAG and UAA. The chain is Peptide chain release factor 1 from Leptospira interrogans serogroup Icterohaemorrhagiae serovar copenhageni (strain Fiocruz L1-130).